A 1401-amino-acid chain; its full sequence is Lysine-specific demethylase 6A (1401 aa).

The interval 1 to 1095 (MKSCGVSLAT…TNIDLSDDKK (1095 aa)) is interaction with SUPT6H. TPR repeat units follow at residues 95–128 (SDFF…QSDY), 132–165 (AAFL…DPSF), 169–203 (KEIH…NPCT), 207–240 (AEIQ…ENLS), 245–285 (ATIL…DPNS), 286–319 (GQSW…SEAS), 321–353 (DTWC…DHGH), and 355–387 (AAWM…KNCS). Residues 439–453 (AMNTAQQNTSDNWSG) are compositionally biased toward polar residues. Residues 439–463 (AMNTAQQNTSDNWSGGNAPPPVEQQ) form a disordered region. Residues Arg519 and Arg549 each carry the omega-N-methylarginine modification. Composition is skewed to polar residues over residues 596–606 (NHVTGSGSNGN), 619–642 (HNRT…STQG), and 660–743 (LSST…STAS). Positions 596 to 745 (NHVTGSGSNG…ETPNSTASVE (150 aa)) are disordered. Phosphoserine is present on Ser769. Disordered regions lie at residues 795-863 (GTCD…EESQ), 914-941 (LLDK…PPTP), and 1043-1080 (FQES…GPFK). Positions 814–833 (SVASSPSSAISTATPSPKST) are enriched in low complexity. Thr827 bears the Phosphothreonine mark. Phosphoserine is present on Ser829. The span at 834-848 (EQTTTNSVTSLNSPH) shows a compositional bias: polar residues. Positions 918–931 (CPPPRPPSSPYPPL) are enriched in pro residues. Basic and acidic residues predominate over residues 1046–1063 (SLREENEKRSHHKDHSDS). One can recognise a JmjC domain in the interval 1095 to 1258 (KWKLQLHELT…YKLAVERYEW (164 aa)). 3 residues coordinate Fe cation: His1146, Glu1148, and His1226. Residues Cys1331, Cys1334, Cys1358, and Cys1361 each contribute to the Zn(2+) site.

It belongs to the UTX family. In terms of assembly, component of the MLL2/3 complex (also named ASCOM complex), at least composed of KMT2D/MLL2 or KMT2C/MLL3, ASH2L, RBBP5, WDR5, NCOA6, DPY30, KDM6A (or KDM6B), PAXIP1/PTIP, PAGR1 and alpha- and beta-tubulin. Interacts with TLE1. Interacts with SUPT6H. Interacts with SMARCA4. Interacts with PROSER1. It depends on L-ascorbate as a cofactor. Requires Fe(2+) as cofactor. In terms of tissue distribution, expressed in brain, heart and spleen.

It localises to the nucleus. It carries out the reaction N(6),N(6),N(6)-trimethyl-L-lysyl(27)-[histone H3] + 2 2-oxoglutarate + 2 O2 = N(6)-methyl-L-lysyl(27)-[histone H3] + 2 formaldehyde + 2 succinate + 2 CO2. In terms of biological role, histone demethylase that specifically demethylates 'Lys-27' of histone H3, thereby playing a central role in histone code. Demethylates trimethylated and dimethylated but not monomethylated H3 'Lys-27'. Plays a central role in regulation of posterior development, by regulating HOX gene expression. Demethylation of 'Lys-27' of histone H3 is concomitant with methylation of 'Lys-4' of histone H3, and regulates the recruitment of the PRC1 complex and monoubiquitination of histone H2A. Plays a demethylase-independent role in chromatin remodeling to regulate T-box family member-dependent gene expression. In Mus musculus (Mouse), this protein is Lysine-specific demethylase 6A (Kdm6a).